The following is a 208-amino-acid chain: Uridine kinase (208 aa).

Residue 11-18 participates in ATP binding; it reads GGSGSGKT.

It belongs to the uridine kinase family.

It is found in the cytoplasm. The catalysed reaction is uridine + ATP = UMP + ADP + H(+). It catalyses the reaction cytidine + ATP = CMP + ADP + H(+). Its pathway is pyrimidine metabolism; CTP biosynthesis via salvage pathway; CTP from cytidine: step 1/3. It functions in the pathway pyrimidine metabolism; UMP biosynthesis via salvage pathway; UMP from uridine: step 1/1. The polypeptide is Uridine kinase (Staphylococcus carnosus (strain TM300)).